Consider the following 359-residue polypeptide: WAT1-related protein At5g64700 (359 aa).

The next 10 helical transmembrane spans lie at 10-30 (LMVT…KAVF), 37-57 (FVFV…LAFF), 66-86 (LSFV…TLSL), 100-120 (LAAA…LLFG), 135-155 (LVGI…KGPL), 186-206 (WLKG…WLVL), 218-238 (LYFT…IAIA), 256-276 (AVIY…SWVI), 282-302 (VFLS…SAIL), and 306-326 (IISL…YCVL). EamA domains are found at residues 18 to 136 (IYTI…AKLV) and 198 to 326 (ILWG…YCVL).

The protein belongs to the drug/metabolite transporter (DMT) superfamily. Plant drug/metabolite exporter (P-DME) (TC 2.A.7.4) family.

It is found in the membrane. The chain is WAT1-related protein At5g64700 from Arabidopsis thaliana (Mouse-ear cress).